The chain runs to 137 residues: uncharacterized protein (137 aa).

This is an uncharacterized protein from Escherichia coli (strain K12).